The primary structure comprises 714 residues: Lipase maturation factor 2 (714 aa).

Transmembrane regions (helical) follow at residues 11-31 (LFLAGLAAAYLAAFVSLYLQI), 79-99 (MELLCLLGAVASMGALLCAPL), 103-125 (LLFAVLRVFYLSLYQVGQVFLYF), 159-179 (SVTFWLVRWLLFRLMFASGVV), 221-241 (FSVVATYVIEIAVPLLFFMPI), 257-277 (ILIILTGNYNFFNALTIVLAF), 304-324 (TLLSFLSTLLELATYALLLYW), 358-378 (VTLPLVGLGFLSLSWEILSAL), and 398-418 (AVFATATVGMFAISLVPFTYI). Asn483 carries N-linked (GlcNAc...) asparagine glycosylation. A helical membrane pass occupies residues 629 to 649 (PFSPHVVLWSLYVVAATTCLL). A compositionally biased stretch (basic residues) spans 654–669 (RRPRGGAPPTRHKAPK). The tract at residues 654–714 (RRPRGGAPPT…EGPRGTKRRK (61 aa)) is disordered. Over residues 683–708 (RRKEGREAEERGEGRSRGAADGEGPR) the composition is skewed to basic and acidic residues.

This sequence belongs to the lipase maturation factor family.

The protein localises to the endoplasmic reticulum membrane. Functionally, involved in the maturation of specific proteins in the endoplasmic reticulum. May be required for maturation and transport of active lipoprotein lipase (LPL) through the secretory pathway. This Gallus gallus (Chicken) protein is Lipase maturation factor 2 (LMF2).